The sequence spans 676 residues: Envelope glycoprotein (676 aa).

The N-terminal stretch at 1 to 32 (MGVTGILQLPRDRFKRTSFFLWVIILFQRTFS) is a signal peptide. Over 33 to 650 (IPLGVIHNST…NDNWWTGWRQ (618 aa)) the chain is Extracellular. N-linked (GlcNAc...) asparagine; by host glycosylation occurs at N40. Cystine bridges form between C53-C609, C108-C135, C121-C147, C511-C556, and C601-C608. The interval 54 to 201 (RDKLSSTNQL…DFFSSHPLRE (148 aa)) is receptor-binding. N-linked (GlcNAc...) asparagine; by host glycans are attached at residues N204, N228, N238, N257, N268, N296, N317, N333, N346, N386, and N413. A mucin-like region region spans residues 305 to 485 (ELSFTVVSNG…SGKLGLITNT (181 aa)). The segment covering 315 to 335 (AKNISGQSPARTSSDPGTNTT) has biased composition (polar residues). Residues 315 to 337 (AKNISGQSPARTSSDPGTNTTTE) are disordered. Over residues 373-391 (TSPQSLTTKPGPDNSTHNT) the composition is skewed to polar residues. Disordered regions lie at residues 373-392 (TSPQ…HNTP) and 402-479 (TQVE…SGKL). Low complexity predominate over residues 414–432 (DSTASDTPSATTAAGPPKA). Residues 433–464 (ENTNTSKSTDFLDPATTTSPQNHSETAGNNNT) are compositionally biased toward polar residues. N436, N454, and N462 each carry an N-linked (GlcNAc...) asparagine; by host glycan. The tract at residues 524 to 539 (GAAIGLAWIPYFGPAA) is fusion peptide. Residues 554-595 (LICGLRQLANETTQALQLFLRATTELRTFSILNRKAIDFLLQ) adopt a coiled-coil conformation. N-linked (GlcNAc...) asparagine; by host glycosylation is present at N563. Residues 615 to 634 (WTKNITDKIDQIIHDFVDKT) adopt a coiled-coil conformation. N618 is a glycosylation site (N-linked (GlcNAc...) asparagine; by host). Residues 651 to 671 (WIPAGIGVTGVIIAVIALFCI) form a helical membrane-spanning segment. S-palmitoyl cysteine; by host attachment occurs at residues C670 and C672. Residues 672–676 (CKFVF) are Cytoplasmic-facing.

Belongs to the filoviruses glycoprotein family. Homotrimer; each monomer consists of a GP1 and a GP2 subunit linked by disulfide bonds. The resulting peplomers (GP1,2) protrude from the virus surface as spikes. Interacts with host integrin alpha-V/ITGAV. Interacts with host CLEC10A. Binds also to host CD209 and CLEC4M/DC-SIGN(R). Interacts with host FOLR1. Interacts with BST2; this interaction inhibits the antiviral effect of BST2 and this allows viral release from infected cells. Interacts with host FCN1; this interaction enhances viral entry. Interacts with host TLR4; this interaction induces cell death in T-lymphocytes or proinflammatory cytokines and SOCS1 production in monocytes. As to quaternary structure, interacts with host entry receptor NPC1. In terms of assembly, GP1 and GP2delta are part of GP1,2delta soluble complexes released by ectodomain shedding. In terms of processing, the signal peptide region modulates GP's high mannose glycosylation, thereby determining the efficiency of the interactions with DC-SIGN(R). Post-translationally, N-glycosylated. O-glycosylated in the mucin-like region. In terms of processing, palmitoylation of GP2 is not required for its function. Post-translationally, specific enzymatic cleavages in vivo yield mature proteins. The precursor is processed into GP1 and GP2 by host cell furin in the trans Golgi, and maybe by other host proteases, to yield the mature GP1 and GP2 proteins. The cleavage site corresponds to the furin optimal cleavage sequence [KR]-X-[KR]-R. This cleavage does not seem to be required for function. After the internalization of the virus into cell endosomes, GP1 C-terminus is removed by the endosomal proteases cathepsin B, cathepsin L, or both, leaving a 19-kDa N-terminal fragment which is further digested by cathepsin B. Proteolytic processing of GP1,2 by host ADAM17 can remove the transmembrane anchor of GP2 and leads to shedding of complexes consisting in GP1 and truncated GP2 (GP1,2delta).

It localises to the virion membrane. Its subcellular location is the host cell membrane. It is found in the secreted. In terms of biological role, trimeric GP1,2 complexes form the virion surface spikes and mediate the viral entry processes, with GP1 acting as the receptor-binding subunit and GP2 as the membrane fusion subunit. At later times of infection, down-regulates the expression of various host cell surface molecules that are essential for immune surveillance and cell adhesion. Down-modulates several integrins including ITGA1, ITGA2, ITGA3, ITGA4, ITGA5, ITGA6, ITGAV and ITGB1. This decrease in cell adhesion molecules may lead to cell detachment, contributing to the disruption of blood vessel integrity and hemorrhages developed during infection (cytotoxicity). Interacts with host TLR4 and thereby stimulates the differentiation and activation of monocytes leading to bystander death of T-lymphocytes. Down-regulates as well the function of host natural killer cells. Counteracts the antiviral effect of host BST2/tetherin that restricts release of progeny virions from infected cells. However, cooperates with VP40 and host BST2 to activate canonical NF-kappa-B pathway in a manner dependent on neddylation. Functionally, functions as a decoy for anti-GP1,2 antibodies thereby contributing to viral immune evasion. Interacts and activates host macrophages and dendritic cells inducing up-regulation of cytokine transcription. This effect is mediated throught activation of host TLR4. Its function is as follows. Responsible for binding to the receptor(s) on target cells. Interacts with CD209/DC-SIGN and CLEC4M/DC-SIGNR which act as cofactors for virus entry into dendritic cells (DCs) and endothelial cells. Binding to the macrophage specific lectin CLEC10A also seems to enhance virus infectivity. Interaction with FOLR1/folate receptor alpha may be a cofactor for virus entry in some cell types, although results are contradictory. Members of the Tyro3 receptor tyrosine kinase family also seem to be cell entry factors in filovirus infection. Once attached, the virions are internalized through clathrin-dependent endocytosis and/or macropinocytosis. After internalization of the virus into the endosomes of the host cell, proteolysis of GP1 by two cysteine proteases, CTSB/cathepsin B and CTSL/cathepsin L removes the glycan cap and allows GP1 binding to the host entry receptor NPC1. NPC1-binding, Ca(2+) and acidic pH induce a conformational change of GP2, which unmasks its fusion peptide and permit membranes fusion. Acts as a class I viral fusion protein. Under the current model, the protein has at least 3 conformational states: pre-fusion native state, pre-hairpin intermediate state, and post-fusion hairpin state. During viral and target cell membrane fusion, the coiled coil regions (heptad repeats) assume a trimer-of-hairpins structure, positioning the fusion peptide in close proximity to the C-terminal region of the ectodomain. The formation of this structure appears to drive apposition and subsequent fusion of viral and target cell membranes. Responsible for penetration of the virus into the cell cytoplasm by mediating the fusion of the membrane of the endocytosed virus particle with the endosomal membrane. Low pH in endosomes induces an irreversible conformational change in GP2, releasing the fusion hydrophobic peptide. This is Envelope glycoprotein (GP) from Epomops franqueti (Franquet's epauletted fruit bat).